A 540-amino-acid chain; its full sequence is Chaperonin GroEL (540 aa).

Residues 29 to 32 (TLGP), 86 to 90 (DGTTT), glycine 413, 476 to 478 (NAA), and aspartate 492 contribute to the ATP site.

Belongs to the chaperonin (HSP60) family. As to quaternary structure, forms a cylinder of 14 subunits composed of two heptameric rings stacked back-to-back. Interacts with the co-chaperonin GroES.

The protein resides in the cytoplasm. It carries out the reaction ATP + H2O + a folded polypeptide = ADP + phosphate + an unfolded polypeptide.. Together with its co-chaperonin GroES, plays an essential role in assisting protein folding. The GroEL-GroES system forms a nano-cage that allows encapsulation of the non-native substrate proteins and provides a physical environment optimized to promote and accelerate protein folding. The chain is Chaperonin GroEL from Tsukamurella paurometabola (Corynebacterium paurometabolum).